The primary structure comprises 123 residues: Nitrogen fixation nifHD1 region GlnB-like protein 2 (123 aa).

The protein belongs to the P(II) protein family.

Functionally, could be involved in the regulation of nitrogen fixation. In Methanosarcina barkeri, this protein is Nitrogen fixation nifHD1 region GlnB-like protein 2 (glnBB).